Consider the following 241-residue polypeptide: Demethylmenaquinone methyltransferase (241 aa).

S-adenosyl-L-methionine-binding residues include threonine 73 and aspartate 92.

It belongs to the class I-like SAM-binding methyltransferase superfamily. MenG/UbiE family.

The enzyme catalyses a 2-demethylmenaquinol + S-adenosyl-L-methionine = a menaquinol + S-adenosyl-L-homocysteine + H(+). The protein operates within quinol/quinone metabolism; menaquinone biosynthesis; menaquinol from 1,4-dihydroxy-2-naphthoate: step 2/2. Methyltransferase required for the conversion of demethylmenaquinol (DMKH2) to menaquinol (MKH2). The polypeptide is Demethylmenaquinone methyltransferase (Chlorobaculum parvum (strain DSM 263 / NCIMB 8327) (Chlorobium vibrioforme subsp. thiosulfatophilum)).